The following is a 205-amino-acid chain: Holliday junction branch migration complex subunit RuvA (205 aa).

Residues 1–62 (MFEYVTGYVE…EDIMALYGFK (62 aa)) form a domain I region. A domain II region spans residues 63-141 (TREERLLFTK…DVVPDAFVDL (79 aa)). A flexible linker region spans residues 142–152 (FSDEERFDEKK). The tract at residues 153–205 (GSSAELDEALEALRALGYAEREVSRVVPELLKESLTTDQYIKKALSLLLNGKR) is domain III.

Belongs to the RuvA family. Homotetramer. Forms an RuvA(8)-RuvB(12)-Holliday junction (HJ) complex. HJ DNA is sandwiched between 2 RuvA tetramers; dsDNA enters through RuvA and exits via RuvB. An RuvB hexamer assembles on each DNA strand where it exits the tetramer. Each RuvB hexamer is contacted by two RuvA subunits (via domain III) on 2 adjacent RuvB subunits; this complex drives branch migration. In the full resolvosome a probable DNA-RuvA(4)-RuvB(12)-RuvC(2) complex forms which resolves the HJ.

It localises to the cytoplasm. Functionally, the RuvA-RuvB-RuvC complex processes Holliday junction (HJ) DNA during genetic recombination and DNA repair, while the RuvA-RuvB complex plays an important role in the rescue of blocked DNA replication forks via replication fork reversal (RFR). RuvA specifically binds to HJ cruciform DNA, conferring on it an open structure. The RuvB hexamer acts as an ATP-dependent pump, pulling dsDNA into and through the RuvAB complex. HJ branch migration allows RuvC to scan DNA until it finds its consensus sequence, where it cleaves and resolves the cruciform DNA. The chain is Holliday junction branch migration complex subunit RuvA from Bacillus cereus (strain AH187).